A 282-amino-acid polypeptide reads, in one-letter code: Acyl-CoA-binding domain-containing protein 6 (282 aa).

A disordered region spans residues 1-39 (MATPFLPSGATTGDSGGELSSGDDSGDMESFQTPEAEGT). Phosphoserine is present on Ser41. The region spanning 42–127 (LAELFEKAAA…VKKLDPGWNP (86 aa)) is the ACB domain. An acyl-CoA is bound by residues 69 to 73 (YARFK) and Lys95. Residue Ser106 is modified to Phosphoserine. Tyr114 contacts an acyl-CoA. 2 ANK repeats span residues 191 to 220 (EGRA…GINC) and 224 to 253 (EGQT…DPTL).

In terms of assembly, monomer.

The protein localises to the cytoplasm. It localises to the nucleus. Its function is as follows. Binds long-chain acyl-coenzyme A molecules with a strong preference for unsaturated C18:1-CoA, lower affinity for unsaturated C20:4-CoA, and very weak affinity for saturated C16:0-CoA. Does not bind fatty acids. Plays a role in protein N-myristoylation. The chain is Acyl-CoA-binding domain-containing protein 6 (Acbd6) from Mus musculus (Mouse).